We begin with the raw amino-acid sequence, 842 residues long: MGFKVETNGGDGSLVSAKVPPLANPLAEKPDEIASNISYHAQYTPHFSPFKFQLQQAYYATAESVRDRLIQQWNETYLHFHKVDPKQTYYLSMEFLQGRALTNAIGNLNIQDAYADALRKFGLELEEITEQEKDAALGNGGLGRLASCFLDSMATLNLPAWGYGLRYRYGLFKQIITKEGQEEVAEDWLEKFSPWEIVRHDVLYPIRFFGQVEVNPDGSRQWIGGEVIQALAYDVPIPGYQTKNTISLRLWEAKACADDFDLFLFNDGQLESASVLHSRAQQICSVLYPGDATEGGKLLRLKQQYFLCSASLQDIISRFKERRQGPWNWSEFPTKVAVQLNDTHPTLSIPELMRLLMDDEGLGWDEAWAVTSKTVAYTNHTVLPEALEKWSQPVMWKLLPRHMEIIEEIDRRFVALISKTRLDLEDEVSNMRILDNNLQKPVVRMANLCVVSSHTVNGVAQLHSDILKSELFASYVSIWPTKFQNKTNGITPRRWINFCSPELSRIITKWLKTDKWVTNLDLLTGLREFADNEDLQAEWLSAKRANKQRLAQYVLQVTGENIDPDSLFDIQVKRIHEYKRQLLNILGVIYRYKKLKEMSPEERKSTTARTVMIGGKAFATYTNAKRIVKLVDDVGSVVNSDPEVNSYLKVVFVPNYNVSVAEVLIPGSELSQHISTAGMEASGTSNMKFALNRVLIIGTLDGANVEIREEIGEENFFLFGATADEVPRLRKERENGLFKPDPRFEEAKKFIRSGVFGSYDYNPLLDSLEGNSGYGRGDYFLVGYDFPSYMDAQEKVDEAYRDKKRWLKMSILSTAGSGKFSSDRTIAQYAKEIWNIEECRVP.

At K688 the chain carries N6-(pyridoxal phosphate)lysine.

Belongs to the glycogen phosphorylase family. Pyridoxal 5'-phosphate is required as a cofactor.

The protein resides in the cytoplasm. It carries out the reaction [(1-&gt;4)-alpha-D-glucosyl](n) + phosphate = [(1-&gt;4)-alpha-D-glucosyl](n-1) + alpha-D-glucose 1-phosphate. Functionally, phosphorylase is an important allosteric enzyme in carbohydrate metabolism. Enzymes from different sources differ in their regulatory mechanisms and in their natural substrates. However, all known phosphorylases share catalytic and structural properties. In terms of biological role, the H isoform exhibits higher affinity for branched polyglucans such as soluble starch or glycogen. The chain is Alpha-glucan phosphorylase, H isozyme from Vicia faba (Broad bean).